We begin with the raw amino-acid sequence, 571 residues long: MSFKMTQNQYTSLYGPTVGDSIRLGDTNLFAQIEKDYAVYGEEATFGGGKSIRDGMAQNPRVTRDDVNVADLVISNAVIIDYDKVVKADIGIKNGYIFAIGNAGNPDIMDNVDIIIGSTTDIIAAEGKIVTAGGIDTHVHFINPEQAEVALESGITTHIGGGTGASEGSKATTVTPGPWHIHRMLEAAEGLPINVGFTGKGQATNPTALIEQINAGAIGLKVHEDWGATPSALSHALDVADEFDVQIALHADTLNEAGFMEDTMAAVKDRVLHMYHTEGAGGGHAPDLIKSAAFPNILPSSTNPTLPYTHNTVDEHLDMVMITHHLNAAIPEDIAFADSRIRKETIAAEDVLQDMGVFSMISSDSQAMGRVGEVITRTWQVAHRMKEQRGPLDGDYVHNDNNRIKRYIAKYTINPAITHGISEYVGSIEPGKLADIVLWDPIFFGVKPELVVKGGLINSAVNGDANGSIPTSEPMKYRKMYGQYGGNLTSTSMTFVSKTAYENGINRALNLKRMVRPVKNIRQLSKADMKNNSATPKLDVDPQTYEVYVDGEKITSNAATELPLTQRYFLF.

Residues 133 to 571 (GGIDTHVHFI…LPLTQRYFLF (439 aa)) enclose the Urease domain. Residues histidine 138, histidine 140, and lysine 221 each contribute to the Ni(2+) site. Residue lysine 221 is modified to N6-carboxylysine. Histidine 223 contacts substrate. Ni(2+)-binding residues include histidine 250 and histidine 276. Histidine 324 acts as the Proton donor in catalysis. Ni(2+) is bound at residue aspartate 364.

Belongs to the metallo-dependent hydrolases superfamily. Urease alpha subunit family. Heterotrimer of UreA (gamma), UreB (beta) and UreC (alpha) subunits. Three heterotrimers associate to form the active enzyme. The cofactor is Ni cation. Carboxylation allows a single lysine to coordinate two nickel ions.

Its subcellular location is the cytoplasm. It catalyses the reaction urea + 2 H2O + H(+) = hydrogencarbonate + 2 NH4(+). Its pathway is nitrogen metabolism; urea degradation; CO(2) and NH(3) from urea (urease route): step 1/1. This Staphylococcus aureus (strain MRSA252) protein is Urease subunit alpha.